The following is a 347-amino-acid chain: Heat-inducible transcription repressor HrcA (347 aa).

It belongs to the HrcA family.

Its function is as follows. Negative regulator of class I heat shock genes (grpE-dnaK-dnaJ and groELS operons). Prevents heat-shock induction of these operons. The polypeptide is Heat-inducible transcription repressor HrcA (Lactobacillus delbrueckii subsp. bulgaricus (strain ATCC BAA-365 / Lb-18)).